The sequence spans 127 residues: Small ribosomal subunit protein uS13 (127 aa).

Residues 97-127 form a disordered region; that stretch reads PVRGQRTKTNARTRKGPRKTVAGKKGVKDLR. Basic residues predominate over residues 101–118; it reads QRTKTNARTRKGPRKTVA.

It belongs to the universal ribosomal protein uS13 family. In terms of assembly, part of the 30S ribosomal subunit. Forms a loose heterodimer with protein S19. Forms two bridges to the 50S subunit in the 70S ribosome.

Located at the top of the head of the 30S subunit, it contacts several helices of the 16S rRNA. In the 70S ribosome it contacts the 23S rRNA (bridge B1a) and protein L5 of the 50S subunit (bridge B1b), connecting the 2 subunits; these bridges are implicated in subunit movement. Contacts the tRNAs in the A and P-sites. The protein is Small ribosomal subunit protein uS13 of Rhodopirellula baltica (strain DSM 10527 / NCIMB 13988 / SH1).